Consider the following 636-residue polypeptide: Transcriptional repressor CTCFL (636 aa).

Disordered regions lie at residues 17 to 38, 160 to 195, and 222 to 257; these read KEQKLKPGDLEEEKEEDGVQRV, ENPELTPDLDESTALKKPEEDEKDQLPPQGETDKRE, and LEEQQDPPAANQTSVPGAKAAKPKRRRQTKGKPQSF. The span at 160–170 shows a compositional bias: acidic residues; sequence ENPELTPDLDE. Residues 242–251 are compositionally biased toward basic residues; the sequence is AKPKRRRQTK. 11 consecutive C2H2-type zinc fingers follow at residues 257 to 279, 285 to 307, 313 to 336, 342 to 364, 370 to 392, 398 to 421, 428 to 451, 458 to 480, 486 to 508, 514 to 537, and 546 to 572; these read FQCDTCPFTSSKLSTFNRHIKIH, HLCHLCLKAFRTVTLLRNHVNTH, HKCRDCDMAFVTSGELVRHRRYKH, FKCSLCKYASVEASKMKRHIRSH, FQCCQCAYASRDSYKLKRHMRTH, YECPTCHVRFTQSGTMKIHIAQKH, YECPHCATIIARKSDLRVHLRNLH, MKCRYCPAGFHERYALIQHQRTH, FKCKQCDYACKQERCLKAHMRMH, FSCLACNKHFRQKQLLTVHLRKYH, and HLCLKCDKRFSRWSNLQRHRKKCDPEH. Residues 562–624 are disordered; that stretch reads QRHRKKCDPE…AAGSQSPDHG (63 aa). A compositionally biased stretch (basic and acidic residues) spans 568–583; sequence CDPEHETLAPNKDRRP.

It belongs to the CTCF zinc-finger protein family. Interacts with histones, PRMT7 and SETD1A. Interacts (via N-terminus) with BAG6/BAT3. Testis-specific.

The protein localises to the cytoplasm. It localises to the nucleus. Functionally, testis-specific DNA binding protein responsible for insulator function, nuclear architecture and transcriptional control, which probably acts by recruiting epigenetic chromatin modifiers. Plays a key role in gene imprinting in male germline, by participating in the establishment of differential methylation at the IGF2/H19 imprinted control region (ICR). Directly binds the unmethylated H19 ICR and recruits the PRMT7 methyltransferase, leading to methylate histone H4 'Arg-3' to form H4R3sme2. This probably leads to recruit de novo DNA methyltransferases at these sites. Seems to act as tumor suppressor. In association with DNMT1 and DNMT3B, involved in activation of BAG1 gene expression by binding to its promoter. Required for dimethylation of H3 lysine 4 (H3K4me2) of MYC and BRCA1 promoters. The protein is Transcriptional repressor CTCFL (Ctcfl) of Mus musculus (Mouse).